Here is a 182-residue protein sequence, read N- to C-terminus: Protein canopy homolog 2 (182 aa).

Residues 1-20 (MKGWGWLALLLGVLLGTAWA) form the signal peptide. The Saposin B-type domain maps to 24 to 175 (QDLHCGACRA…KRTDLCDHAL (152 aa)). Disulfide bonds link Cys-28–Cys-171, Cys-31–Cys-164, and Cys-86–Cys-137. At Ser-115 the chain carries Phosphoserine. A Prevents secretion from ER motif is present at residues 179–182 (HDEL).

Belongs to the canopy family. As to quaternary structure, interacts with MYLIP/MIR.

It is found in the endoplasmic reticulum. In terms of biological role, positive regulator of neurite outgrowth by stabilizing myosin regulatory light chain (MRLC). It prevents MIR-mediated MRLC ubiquitination and its subsequent proteasomal degradation. The chain is Protein canopy homolog 2 (Cnpy2) from Mus musculus (Mouse).